Reading from the N-terminus, the 1390-residue chain is General transcriptional corepressor trfA (1390 aa).

The disordered stretch occupies residues 53–143 (QQQQQHQQHQ…QQQQQQQQQQ (91 aa)). TPR repeat units follow at residues 171–204 (ESIW…NPFS), 206–238 (KALT…ESKN), 239–272 (GEVW…LPNP), 275–308 (PNLW…DNKF), 312–345 (TEIY…PPLP), 349–382 (SDIW…NATH), 384–419 (KVLQ…DSSD), 420–453 (AQTW…DGRN), 454–487 (PTFW…NPFL), and 489–521 (EVWY…DPHN). Disordered stretches follow at residues 539-596 (PIGK…NSFV), 632-938 (ERGR…YNNI), and 958-1390 (LDEE…KLER). The span at 540-557 (IGKDGYDLQNGEHGEHGG) shows a compositional bias: basic and acidic residues. The segment covering 582–593 (QNNRNGNNNGNN) has biased composition (low complexity). Residues 632-641 (ERGRGEDMHN) show a composition bias toward basic and acidic residues. A compositionally biased stretch (low complexity) spans 644 to 744 (HSQYSNSMSM…MNDNVNSKNN (101 aa)). Over residues 745–803 (DVLDRRYKGILEREKTSPNGDGRDNRDNIRDNRDNRDSRDGRDNRDGRDSRDRIQEYTR) the composition is skewed to basic and acidic residues. Residues 805-846 (YNNNNNNNNSISSINNNNNNNNNNYNNNNNNNNNNNNNNNNN) are compositionally biased toward low complexity. A compositionally biased stretch (basic and acidic residues) spans 857–871 (HNDRRSYERDNKERI). Low complexity-rich tracts occupy residues 872–898 (NNNN…NNNN) and 917–937 (NNSN…NYNN). Composition is skewed to basic and acidic residues over residues 977 to 993 (KEAE…KERS), 1000 to 1029 (EKPD…EKES), 1037 to 1099 (KEIE…EKES), and 1120 to 1135 (TKKD…EKKL). Residues 1136–1146 (SSVSPTTTAVE) show a composition bias toward polar residues. Residues 1147-1169 (QSRDETKELEMDTKEDSEKEKKS) show a composition bias toward basic and acidic residues. Low complexity-rich tracts occupy residues 1170–1180 (STTTTAAASES) and 1192–1203 (TTTTTTTTNTTT). Over residues 1206 to 1218 (PTHKDKESSKNDD) the composition is skewed to basic and acidic residues. Over residues 1219 to 1228 (TTTTTTTTTT) the composition is skewed to low complexity. The span at 1229–1239 (KSAKSPNSSPT) shows a compositional bias: polar residues. Basic and acidic residues predominate over residues 1240–1263 (RSDEVVEPHQDASQEEINKRKLED). 2 stretches are compositionally biased toward low complexity: residues 1277-1289 (STPS…STPS) and 1315-1337 (SSSS…TNSS). Residues 1339–1374 (KNERDRDRERERERERDREREREREREREREREKNK) are compositionally biased toward basic and acidic residues.

This sequence belongs to the CYC8/SSN6 family. Associates with tupA to form the trfA-tupA corepressor complex.

Its subcellular location is the nucleus. Acts as a component of the trfA-tupA corepressor complex which is involved in the repression of many genes in a wide variety of physiological processes. May also be involved in the derepression of at least some target genes. The complex is recruited to target genes by interaction with DNA-bound transcriptional repressors. The complex recruits histone deacetylases to produce a repressive chromatin structure, interacts with hypoacetylated N-terminal tails of histones H3 and H4 that have been programmed for repression by the action of histone deacetylases and interferes directly with the transcriptional machinery by associating with the RNA polymerase II mediator complex. Required for normal growth and for aggregation in early development. Required for a proper chemotactic response to cAMP. The chain is General transcriptional corepressor trfA (trfA) from Dictyostelium discoideum (Social amoeba).